We begin with the raw amino-acid sequence, 338 residues long: H(2)-forming methylenetetrahydromethanopterin dehydrogenase-related protein MJ0715 (338 aa).

Belongs to the HMD family.

The protein is H(2)-forming methylenetetrahydromethanopterin dehydrogenase-related protein MJ0715 of Methanocaldococcus jannaschii (strain ATCC 43067 / DSM 2661 / JAL-1 / JCM 10045 / NBRC 100440) (Methanococcus jannaschii).